The chain runs to 90 residues: Elongation factor 1-beta (90 aa).

Belongs to the EF-1-beta/EF-1-delta family.

Promotes the exchange of GDP for GTP in EF-1-alpha/GDP, thus allowing the regeneration of EF-1-alpha/GTP that could then be used to form the ternary complex EF-1-alpha/GTP/AAtRNA. This Aeropyrum pernix (strain ATCC 700893 / DSM 11879 / JCM 9820 / NBRC 100138 / K1) protein is Elongation factor 1-beta (ef1b).